The sequence spans 497 residues: Glycogen synthase (497 aa).

An ADP-alpha-D-glucose-binding site is contributed by lysine 15.

Belongs to the glycosyltransferase 1 family. Bacterial/plant glycogen synthase subfamily.

The catalysed reaction is [(1-&gt;4)-alpha-D-glucosyl](n) + ADP-alpha-D-glucose = [(1-&gt;4)-alpha-D-glucosyl](n+1) + ADP + H(+). It functions in the pathway glycan biosynthesis; glycogen biosynthesis. Synthesizes alpha-1,4-glucan chains using ADP-glucose. This Thermodesulfovibrio yellowstonii (strain ATCC 51303 / DSM 11347 / YP87) protein is Glycogen synthase.